The following is a 244-amino-acid chain: Putative ribosomal recycling factor, mitochondrial (244 aa).

Belongs to the RRF family.

The protein localises to the mitochondrion. Its function is as follows. Necessary for protein synthesis in mitochondria. Functions as a ribosome recycling factor in mitochondria. The protein is Putative ribosomal recycling factor, mitochondrial (rrf1) of Schizosaccharomyces pombe (strain 972 / ATCC 24843) (Fission yeast).